A 728-amino-acid polypeptide reads, in one-letter code: Homoaconitase, mitochondrial (728 aa).

The transit peptide at 1-24 (MVAIPRLARLSVPAWALSARGRFY) directs the protein to the mitochondrion. [4Fe-4S] cluster-binding residues include Cys-362, Cys-422, and Cys-425.

It belongs to the aconitase/IPM isomerase family. It depends on [4Fe-4S] cluster as a cofactor.

The protein localises to the mitochondrion. It carries out the reaction (2R,3S)-homoisocitrate = cis-homoaconitate + H2O. It functions in the pathway amino-acid biosynthesis; L-lysine biosynthesis via AAA pathway; L-alpha-aminoadipate from 2-oxoglutarate: step 3/5. Functionally, catalyzes the reversible hydration of cis-homoaconitate to (2R,3S)-homoisocitrate, a step in the alpha-aminoadipate pathway for lysine biosynthesis. This Cryptococcus neoformans var. neoformans serotype D (strain JEC21 / ATCC MYA-565) (Filobasidiella neoformans) protein is Homoaconitase, mitochondrial (LYS4).